The following is a 476-amino-acid chain: 4-(hydroxymethyl)benzenesulfonate dehydrogenase TsaD1 (476 aa).

Residues 154–155 (WN), 178–181 (KAAE), and 230–231 (GS) each bind NAD(+). Glu252 acts as the Proton acceptor in catalysis. Leu253 lines the NAD(+) pocket. Cys286 serves as the catalytic Nucleophile. Glu380 contacts NAD(+).

This sequence belongs to the aldehyde dehydrogenase family. In terms of assembly, homodimer.

The catalysed reaction is 4-(hydroxymethyl)benzenesulfonate + NAD(+) = 4-formylbenzenesulfonate + NADH + H(+). Its function is as follows. Involved in the toluene-4-sulfonate degradation pathway. Does not discriminate between the sulfonate and the carboxyl substituents and can also be involved in the p-toluenecarboxylate degradation pathway. In Comamonas testosteroni (Pseudomonas testosteroni), this protein is 4-(hydroxymethyl)benzenesulfonate dehydrogenase TsaD1 (tsaD1).